The following is a 424-amino-acid chain: Serine--tRNA ligase (424 aa).

Position 233–235 (233–235 (TAE)) interacts with L-serine. ATP is bound at residue 264-266 (RRE). Residue Glu-287 coordinates L-serine. 351–354 (EISS) lines the ATP pocket. Ser-387 contributes to the L-serine binding site.

This sequence belongs to the class-II aminoacyl-tRNA synthetase family. Type-1 seryl-tRNA synthetase subfamily. Homodimer. The tRNA molecule binds across the dimer.

It is found in the cytoplasm. The enzyme catalyses tRNA(Ser) + L-serine + ATP = L-seryl-tRNA(Ser) + AMP + diphosphate + H(+). The catalysed reaction is tRNA(Sec) + L-serine + ATP = L-seryl-tRNA(Sec) + AMP + diphosphate + H(+). It functions in the pathway aminoacyl-tRNA biosynthesis; selenocysteinyl-tRNA(Sec) biosynthesis; L-seryl-tRNA(Sec) from L-serine and tRNA(Sec): step 1/1. Its function is as follows. Catalyzes the attachment of serine to tRNA(Ser). Is also able to aminoacylate tRNA(Sec) with serine, to form the misacylated tRNA L-seryl-tRNA(Sec), which will be further converted into selenocysteinyl-tRNA(Sec). The protein is Serine--tRNA ligase of Acaryochloris marina (strain MBIC 11017).